The primary structure comprises 473 residues: Cysteine--tRNA ligase (473 aa).

C30 lines the Zn(2+) pocket. The 'HIGH' region motif lies at 32-42 (MTVYDYCHIGH). Residues C213, H238, and E242 each contribute to the Zn(2+) site. The short motif at 270 to 274 (KMSKS) is the 'KMSKS' region element. Position 273 (K273) interacts with ATP.

This sequence belongs to the class-I aminoacyl-tRNA synthetase family. Monomer. Zn(2+) serves as cofactor.

It localises to the cytoplasm. It catalyses the reaction tRNA(Cys) + L-cysteine + ATP = L-cysteinyl-tRNA(Cys) + AMP + diphosphate. The chain is Cysteine--tRNA ligase from Acinetobacter baylyi (strain ATCC 33305 / BD413 / ADP1).